A 618-amino-acid polypeptide reads, in one-letter code: Chaperone protein dnaK (618 aa).

The interval 595–618 is disordered; sequence SKTETTTPNKNEEDVIDASFSEEK.

Belongs to the heat shock protein 70 family.

It localises to the plastid. Its subcellular location is the cyanelle. Functionally, acts as a chaperone. This Cyanophora paradoxa protein is Chaperone protein dnaK (dnaK-A).